The sequence spans 699 residues: LMBR1 domain-containing protein 2 homolog (699 aa).

Residues 1–3 are Extracellular-facing; it reads MAY. The helical transmembrane segment at 4 to 26 threads the bilayer; the sequence is LLTFGIIAALCLASISLYRYGNI. Residues 27-30 lie on the Cytoplasmic side of the membrane; sequence PRQH. Residues 31 to 51 traverse the membrane as a helical segment; that stretch reads ILVTLSVLTAWCFSFLIVFTI. The Extracellular segment spans residues 52 to 106; it reads PLDVTSTLYRQCLAEHKLALDAAGNASTTANITPPPECQEPWGMVPESVFPNLWR. The N-linked (GlcNAc...) asparagine glycan is linked to Asn76. The helical transmembrane segment at 107–127 threads the bilayer; that stretch reads IIYWSSQFLTWLIMPLMQSYL. At 128–144 the chain is on the cytoplasmic side; that stretch reads KAGDFTIKGKLKSALIE. The chain crosses the membrane as a helical span at residues 145–165; it reads NAIYYGSYLFICGVLLIYIAV. Topologically, residues 166–181 are extracellular; that stretch reads KGVPLDWQKLKAIASS. The helical transmembrane segment at 182–202 threads the bilayer; that stretch reads ASNTWGLFLLILLLGYALVEV. Residues 203-381 lie on the Cytoplasmic side of the membrane; sequence PRSLWNNAKP…ECLLKAPFLK (179 aa). A helical transmembrane segment spans residues 382 to 402; the sequence is TLCVVTATMSAMVVWSEVTFF. Over 403-426 the chain is Extracellular; that stretch reads SRDPVLSIFANVIYLAKESYDFFT. A helical transmembrane segment spans residues 427–447; that stretch reads IEVFSMMVLCYFFYCTYSTIL. Over 448 to 467 the chain is Cytoplasmic; the sequence is RIRFLNLYYLAPHHQTNEHS. A helical transmembrane segment spans residues 468–488; that stretch reads LIFSGMLLCRLTPPMCLNFLG. Residues 489–514 are Extracellular-facing; sequence LIHMDSHIIPERMMETYYTRIMGHMD. Residues 515–535 form a helical membrane-spanning segment; the sequence is VIGIISNGFNIYFPMCMLAFC. Topologically, residues 536 to 699 are cytoplasmic; sequence LSTWFSLGSR…PPPRGLFDDV (164 aa). Residues 564 to 592 adopt a coiled-coil conformation; sequence ELVQEGKDLIAREKRRRQRAEEAMARRRD. The disordered stretch occupies residues 669 to 699; that stretch reads FRGTSELDPDYEAENERRIVGPPPRGLFDDV.

It belongs to the LIMR family.

It is found in the membrane. This chain is LMBR1 domain-containing protein 2 homolog, found in Drosophila pseudoobscura pseudoobscura (Fruit fly).